The chain runs to 679 residues: MSAQNGMYYSLLEWFKTLNLNAPHANAEELSDGVALAQALNQFAPESFTNSWLSKIKSSAVGSNWRLRMSNLKKVVEGVYEYYSDVLNYTLQPDFAKPDVQAIAEKCDLTELERLLQLVLGCAVNCAKKQSYICEIMCLEEELQANIMRALQDLESSTRQSVEGGGVVSSMSRNSLSNMLEGNTKAQEERDAMAQKCFETEKKMLLLIDEKNNLQQELQKIQQEFARLELNTIGDDGVSLGPIQAGSVRYNELRRQLELVKEELLQSEGAREDLKIKAQQQEADILHMQQRIDELMKTTAELTSLKDEVDVLRESTEKLKVCEAQLETYKKKLEEYNDLKKHVKMLEERSADYVQQNAQFEEDAKRYANTKGQIELFKKEIQDLHTKLDNESSKNVKLEFDNKNLESKALALQREKDSLLKERDNLREAFDELKCGQLSTNSGSLTGNTVSRELQPAAMVDKIQRLEAENKALREGQGGQTALAQLLDDANKRCEHLREQIKAANERILSLTHASQSDDPILKENELSKQIKQLMELNEQKTLQIEESSTQNSAMQCKITQLESTLSTREQELMAYEVKYRKCVEKAKEVIKTIDPRIASGLEANILEKSIDVIEEESKTKMSTMEEQLMTSAYYRLGVNAHRDAVESKLALLMGSGQTFLARQRQSAPRKSLTTMKSK.

The region spanning 5-123 is the Calponin-homology (CH) domain; that stretch reads NGMYYSLLEW…RLLQLVLGCA (119 aa). The stretch at 140 to 627 forms a coiled coil; it reads EEELQANIMR…SKTKMSTMEE (488 aa).

This sequence belongs to the hook family. In terms of assembly, homodimer. Interacts with microtubules via its N-terminus.

Its subcellular location is the cytoplasm. It is found in the cytoskeleton. It localises to the endosome. The protein resides in the synapse. In terms of biological role, involved in endocytic trafficking by stabilizing organelles of the endocytic pathway. Probably acts as a cytoskeletal linker protein required to tether endosome vesicles to the cytoskeleton. Involved in modulation of endocytosis at stages required for down-regulation of membrane proteins that control synapse size. Not involved in synaptic vesicle recycling. Required in R7 cells for boss endocytosis into multivesicular bodies (MVBs). Has a role in regulating adult longevity. This chain is Protein hook, found in Drosophila mojavensis (Fruit fly).